The primary structure comprises 66 residues: DNA-directed RNA polymerase subunit Rpo10 (66 aa).

Zn(2+) contacts are provided by C7, C10, C44, and C45.

This sequence belongs to the archaeal Rpo10/eukaryotic RPB10 RNA polymerase subunit family. As to quaternary structure, part of the RNA polymerase complex. Zn(2+) is required as a cofactor.

The protein localises to the cytoplasm. It catalyses the reaction RNA(n) + a ribonucleoside 5'-triphosphate = RNA(n+1) + diphosphate. Functionally, DNA-dependent RNA polymerase (RNAP) catalyzes the transcription of DNA into RNA using the four ribonucleoside triphosphates as substrates. This is DNA-directed RNA polymerase subunit Rpo10 from Sulfurisphaera tokodaii (strain DSM 16993 / JCM 10545 / NBRC 100140 / 7) (Sulfolobus tokodaii).